A 212-amino-acid chain; its full sequence is Interleukin-6 (212 aa).

A signal peptide spans 1-27 (MNSVSTSAFGPVAFSLGLLLVLPAAFP). Cysteine 72 and cysteine 78 are joined by a disulfide. The N-linked (GlcNAc...) asparagine glycan is linked to asparagine 73. Serine 81 is subject to Phosphoserine. A disulfide bridge links cysteine 101 with cysteine 111. N-linked (GlcNAc...) asparagine glycosylation occurs at asparagine 172.

This sequence belongs to the IL-6 superfamily. Component of a hexamer of two molecules each of IL6, IL6R and IL6ST; first binds to IL6R to associate with the signaling subunit IL6ST. Interacts with IL6R (via the N-terminal ectodomain); this interaction may be affected by IL6R-binding with SORL1, hence decreasing IL6 cis signaling. Interacts with SORL1 (via the N-terminal ectodomain); this interaction leads to IL6 internalization and lysosomal degradation. May form a trimeric complex with the soluble SORL1 ectodomain and soluble IL6R receptor; this interaction might stabilize circulating IL6, hence promoting IL6 trans signaling.

It localises to the secreted. In terms of biological role, cytokine with a wide variety of biological functions in immunity, tissue regeneration, and metabolism. Binds to IL6R, then the complex associates to the signaling subunit IL6ST/gp130 to trigger the intracellular IL6-signaling pathway. The interaction with the membrane-bound IL6R and IL6ST stimulates 'classic signaling', whereas the binding of IL6 and soluble IL6R to IL6ST stimulates 'trans-signaling'. Alternatively, 'cluster signaling' occurs when membrane-bound IL6:IL6R complexes on transmitter cells activate IL6ST receptors on neighboring receiver cells. Its function is as follows. IL6 is a potent inducer of the acute phase response. Rapid production of IL6 contributes to host defense during infection and tissue injury, but excessive IL6 synthesis is involved in disease pathology. In the innate immune response, is synthesized by myeloid cells, such as macrophages and dendritic cells, upon recognition of pathogens through toll-like receptors (TLRs) at the site of infection or tissue injury. In the adaptive immune response, is required for the differentiation of B cells into immunoglobulin-secreting cells. Plays a major role in the differentiation of CD4(+) T cell subsets. Essential factor for the development of T follicular helper (Tfh) cells that are required for the induction of germinal-center formation. Required to drive naive CD4(+) T cells to the Th17 lineage. Also required for proliferation of myeloma cells and the survival of plasmablast cells. Functionally, acts as an essential factor in bone homeostasis and on vessels directly or indirectly by induction of VEGF, resulting in increased angiogenesis activity and vascular permeability. Induces, through 'trans-signaling' and synergistically with IL1B and TNF, the production of VEGF. Involved in metabolic controls, is discharged into the bloodstream after muscle contraction increasing lipolysis and improving insulin resistance. 'Trans-signaling' in central nervous system also regulates energy and glucose homeostasis. Mediates, through GLP-1, crosstalk between insulin-sensitive tissues, intestinal L cells and pancreatic islets to adapt to changes in insulin demand. Also acts as a myokine. Plays a protective role during liver injury, being required for maintenance of tissue regeneration. Also has a pivotal role in iron metabolism by regulating HAMP/hepcidin expression upon inflammation or bacterial infection. Through activation of IL6ST-YAP-NOTCH pathway, induces inflammation-induced epithelial regeneration. This Macaca thibetana (Pere David's macaque) protein is Interleukin-6 (IL6).